The chain runs to 182 residues: MPVRPARCYKRIKGPPYTREEYIHGAPMIQIPKFDMGTTSAAARAAFPLVAKLVVQERGQIRMQALEAARQMAYKYLSKYVGDANYYLRLEAVPHHVLRENRMLAMAGADRLQEGMRLAFGSPAGRAARVEAGQVIFYAEFKPEHVAHMKEALRRASTKLPLPTRIVIEAKGDGGGKAATQG.

Belongs to the universal ribosomal protein uL16 family.

In Pyrobaculum neutrophilum (strain DSM 2338 / JCM 9278 / NBRC 100436 / V24Sta) (Thermoproteus neutrophilus), this protein is Large ribosomal subunit protein uL16.